A 493-amino-acid chain; its full sequence is MEKKLKSWQGWLLFCGAMAVVFVLGLVVSSLMERRAETVSVFNNKRVEITGIEARNEVFGENYPRQYETWKETAKTDFKSEFNGNEAVDVLEQRPEMVVLWAGYAFSKDYSTPRGHMHAIEDITHSLRTGAPMDDKSGPQPSTCWTCKSPDVPRMMEAIGVDSFYNNKWGAFGSEIVNPIGCADCHEPTNMKLHISRPALREAFARQGKDIDKATPQEMRSLVCAQCHVEYYFKGDGKYLTFPWDKGFSVEDMEAYYDEADFADYTHALSKARILKAQHPDYEISQMGIHAQRGVSCADCHMPYKSEGGMKFSDHHIQSPLAMIDRTCQVCHRESEETLRNNVYDRQRKANEIRGRLEQELAKAHIEAKFAWDKGATDVQMAEALKLIRQAQWRWDFGVASHGGAFHAPQEIQRILGHGLDKALQARLAISKVLAQHGYTADVPMPDISTKEKAQEYIGLDMEKERKAKDKFLKTIVPEWLEKARANGRLAKL.

A signal peptide spans 1–25; it reads MEKKLKSWQGWLLFCGAMAVVFVLG. Heme c is bound at residue H116. Heme contacts are provided by C144, C147, and K148. Positions 182, 185, 186, 224, 227, and 228 each coordinate heme c. 4 residues coordinate Ca(2+): E230, Y231, K276, and Q278. Residue Y231 coordinates substrate. Substrate is bound at residue H279. Heme c-binding residues include H290, C297, C300, H301, H315, C328, C331, H332, and H407.

The protein belongs to the cytochrome c-552 family. The cofactor is Ca(2+). Heme c serves as cofactor.

The protein resides in the periplasm. It carries out the reaction 6 Fe(III)-[cytochrome c] + NH4(+) + 2 H2O = 6 Fe(II)-[cytochrome c] + nitrite + 8 H(+). The protein operates within nitrogen metabolism; nitrate reduction (assimilation). Its function is as follows. Catalyzes the reduction of nitrite to ammonia, consuming six electrons in the process. This chain is Cytochrome c-552, found in Bacteroides fragilis (strain ATCC 25285 / DSM 2151 / CCUG 4856 / JCM 11019 / LMG 10263 / NCTC 9343 / Onslow / VPI 2553 / EN-2).